The chain runs to 73 residues: Conotoxin reg3a (73 aa).

An N-terminal signal peptide occupies residues M1 to A20. A propeptide spanning residues L21–R55 is cleaved from the precursor. 4-hydroxyproline occurs at positions 59, 60, 65, and 70. C72 carries the post-translational modification Cysteine amide.

In terms of processing, contains 3 disulfide bonds. Expressed by the venom duct.

The protein resides in the secreted. This is Conotoxin reg3a from Conus regius (Crown cone).